A 293-amino-acid chain; its full sequence is Taste receptor type 2 member 143 (293 aa).

The Extracellular portion of the chain corresponds to 1–6 (MPSTPT). Residues 7-27 (LIFIIIFYLVSLASMLQNGFM) traverse the membrane as a helical segment. Topologically, residues 28 to 55 (MIVLGREWMRNRTLPAADMIVASLASSR) are cytoplasmic. The chain crosses the membrane as a helical span at residues 56–76 (FCLHGIAILANLLASFDFCYQ). Over 77–79 (ANL) the chain is Extracellular. A helical membrane pass occupies residues 80–100 (IGILWDFTNTLIFWLTAWLAI). The Cytoplasmic segment spans residues 101-127 (FYCVKISSFSHPVLFWLKWRISQLVPR). Residues 128-148 (LLVVSLIIGGLSAVISATGNF) form a helical membrane-spanning segment. At 149–181 (MANQMTISQGFHGNCTFGHMSLDFYRYYYLYHS) the chain is on the extracellular side. Asn-162 carries an N-linked (GlcNAc...) asparagine glycan. The helical transmembrane segment at 182 to 202 (VLMWFTPFFLFLVSVIVLMFS) threads the bilayer. Residues 203 to 227 (LYQHVEKMRGHRPGPWDLHTQAHTM) are Cytoplasmic-facing. The chain crosses the membrane as a helical span at residues 228–248 (ALKSLTFFFIFYIFFFLALVI). At 249-264 (SSTKRKSMQSYYWARE) the chain is on the extracellular side. The helical transmembrane segment at 265-285 (AIIYTGIFLNSIILLFSNPKL) threads the bilayer. Residues 286–293 (RKALKMRF) lie on the Cytoplasmic side of the membrane.

The protein belongs to the G-protein coupled receptor T2R family.

Its subcellular location is the membrane. Its function is as follows. Putative taste receptor which may play a role in the perception of bitterness. This Mus musculus (Mouse) protein is Taste receptor type 2 member 143 (Tas2r143).